The following is a 112-amino-acid chain: MEMPPCALGLFCFCSSCFCLCCPRHRPVSRLAVAAGKRGAAVVSGVTGLILSPSPSPIFIQPTPSHLTFQPPPGLELALGSQSVHSAPLGVTSPSAPPLPPVVDLPQLGLRR.

Hydrophobic regions lie at residues 7–23 (ALGL…LCCP) and 40–60 (AAVV…PIFI). The tract at residues 28 to 66 (VSRLAVAAGKRGAAVVSGVTGLILSPSPSPIFIQPTPSH) is interaction with host HPX. Positions 70–112 (QPPPGLELALGSQSVHSAPLGVTSPSAPPLPPVVDLPQLGLRR) are homodimerization, and interaction with host AMBP/bikunin. A disordered region spans residues 89 to 112 (LGVTSPSAPPLPPVVDLPQLGLRR). The interval 93–102 (SPSAPPLPPV) is interaction with host SRC, HCK, FYN, PIK3R3 and GRB2. Residues 94–97 (PSAP) carry the PTAP/PSAP motif motif.

The protein belongs to the hepevirus ORF3 protein family. As to quaternary structure, forms homooligomers. Interacts with host SRC, HCK, FYN, PIK3R3 and GRB2 (via SH3 domain); binding does not activate the kinases. Interacts with host AMBP/bikunin and AMBP/alpha-1-microglobulin peptides. Interacts with host HPX/hemopexin. Interacts (when phosphorylated) with capsid protein ORF2. Interacts with host TSG101; this interaction plays a role in viral release from the host cell. Interacts with host SIRPA; this interaction down-regulates the phosphorylation of host IRF3. Post-translationally, palmitoylated in the N-terminus.

The protein resides in the host endoplasmic reticulum membrane. The protein localises to the host cytoplasm. It localises to the host cytoskeleton. Its subcellular location is the virion. It is found in the host cell membrane. Small multifunctional phosphoprotein involved in virion morphogenesis, egress and counteracting host innate immunity. Plays critical roles in the final steps of viral release by interacting with host TSG101, a member of the vacuolar protein-sorting pathway and using other cellular host proteins involved in vesicle formation pathway. Also acts as a viroporin and forms ion conductive pores allowing viral particle release. Impairs the generation of type I interferon by down-regulating host TLR3 and TLR7 as well as their downstream signaling pathways. Down-regulates the phosphorylation of host IRF3 via the interaction with host SIRP-alpha, thereby inhibiting IFN-I expression. Interacts with host microtubules. This Bandicota bengalensis (lesser bandicoot rat) protein is Protein ORF3.